The chain runs to 467 residues: MSPDELVYLGILAATIPVGFLFRYLSPPVKQGAALLLGLIISIATCGIHTLHSLCTVLGTWIIIKINWRSAPALSLAWTFLYLLFFRLVTWFGLPQPTPFANAIQLLLTLKMVSLANEVQSYHLERKKEVSTFTKSPVVAGLSHEPSLYDIISYSYCYVGIMTGPFFRYQTYADWLQQSSPLSLPGKEPCLQRLKMVPVYGLLFIAVNSVFPLSYVRTEDFLEHNYFYRFFYMVAIFFVFRMRFYSAWCGAEAGCISAGLGCYPQGALSKPGGGPTVKYSPDPETAVEYDFKTIQNIDCYNTDFCVKVRHGMRYWNMTVQWWLHHYIYPNAPFRAYALRAGWTMLISAYWHGLHAGYYLSFLTIPLCIAAETAMEASVRARLGPAGQNIFDWIHWFLKMRAYDYMCMGFVLLKASDTISYWSSIYFVIHIIAIVCIAVGQFMKGGRKREKRERGEGEKEDAVREKAE.

At 1-5 (MSPDE) the chain is on the cytoplasmic side. Residues 6–22 (LVYLGILAATIPVGFLF) traverse the membrane as a helical segment. Topologically, residues 23-33 (RYLSPPVKQGA) are lumenal. A helical transmembrane segment spans residues 34 to 57 (ALLLGLIISIATCGIHTLHSLCTV). Residues 58 to 73 (LGTWIIIKINWRSAPA) lie on the Cytoplasmic side of the membrane. The chain crosses the membrane as a helical span at residues 74 to 93 (LSLAWTFLYLLFFRLVTWFG). The Lumenal portion of the chain corresponds to 94–193 (LPQPTPFANA…LPGKEPCLQR (100 aa)). A helical transmembrane segment spans residues 194–211 (LKMVPVYGLLFIAVNSVF). Residues 212–230 (PLSYVRTEDFLEHNYFYRF) are Cytoplasmic-facing. A helical membrane pass occupies residues 231–260 (FYMVAIFFVFRMRFYSAWCGAEAGCISAGL). Over 261-421 (GCYPQGALSK…LKASDTISYW (161 aa)) the chain is Lumenal. Residue Asn316 is glycosylated (N-linked (GlcNAc...) asparagine). The chain crosses the membrane as a helical span at residues 422–442 (SSIYFVIHIIAIVCIAVGQFM). Topologically, residues 443-467 (KGGRKREKRERGEGEKEDAVREKAE) are cytoplasmic. Residues 447–467 (KREKRERGEGEKEDAVREKAE) are disordered. The span at 451–467 (RERGEGEKEDAVREKAE) shows a compositional bias: basic and acidic residues.

It belongs to the membrane-bound acyltransferase family.

It localises to the endoplasmic reticulum membrane. The enzyme catalyses a 1-acyl-sn-glycero-3-phospho-(1D-myo-inositol) + (5Z,8Z,11Z,14Z)-eicosatetraenoyl-CoA = a 1-acyl-2-(5Z,8Z,11Z,14Z-eicosatetraenoyl)-sn-glycero-3-phospho-(1D-myo-inositol) + CoA. It catalyses the reaction (5Z,8Z,11Z,14Z)-eicosatetraenoyl-CoA + 1-hexadecanoyl-sn-glycero-3-phosphocholine = 1-hexadecanoyl-2-(5Z,8Z,11Z,14Z-eicosatetraenoyl)-sn-glycero-3-phosphocholine + CoA. The catalysed reaction is a 1-acyl-sn-glycero-3-phospho-(1D-myo-inositol) + an acyl-CoA = a 1,2-diacyl-sn-glycero-3-phospho-(1D-myo-inositol) + CoA. It carries out the reaction 1-octadecanoyl-sn-glycero-3-phospho-(1D-myo-inositol) + (5Z,8Z,11Z,14Z)-eicosatetraenoyl-CoA = 1-octadecanoyl-2-(5Z,8Z,11Z,14Z-eicosatetraenoyl)-sn-glycero-3-phospho-(1D-myo-inositol) + CoA. It functions in the pathway lipid metabolism; phospholipid metabolism. Functionally, acyltransferase which catalyzes the transfer of an acyl group from an acyl-CoA to a lysophosphatidylinositol (1-acylglycerophosphatidylinositol or LPI) leading to the production of a phosphatidylinositol (1,2-diacyl-sn-glycero-3-phosphoinositol or PI) and participates in the reacylation step of the phospholipid remodeling pathway also known as the Lands cycle. Prefers arachidonoyl-CoA as the acyl donor, thus contributing to the regulation of free levels arachidonic acid in cell. The sequence is that of Membrane-bound acylglycerophosphatidylinositol O-acyltransferase mboat7 (mboat7) from Danio rerio (Zebrafish).